Reading from the N-terminus, the 242-residue chain is Prosalusin (242 aa).

A signal peptide spans 1–26 (MAAATRGCRPWGSLLGLLGLVSAAAA). The propeptide occupies 27–189 (AWDLASLRCT…SSWVVYGTNY (163 aa)). 93–100 (GWTGTGKS) contacts ATP. An N-linked (GlcNAc...) asparagine glycan is attached at Asn-149. The interval 210–242 (PPRRSGALPPAPAAPRPALRAQRAGPAGPGAKG) is disordered. Residues 225–235 (RPALRAQRAGP) show a composition bias toward low complexity. Lys-241 is modified (lysine amide).

Belongs to the ClpA/ClpB family. Torsin subfamily. In terms of processing, amidation of salusin-alpha(29-Gly) by peptidylglycine alpha-amidating monooxygenase, PAM, converts Lys-241-Gly-242 to Lys-241-NH2 and gives raise to salusin-alpha. As to expression, isoform 4 is ubiquitously expressed, with high level in vascular endothelial cells and vascular smooth muscle cells.

It localises to the secreted. Its function is as follows. Salusins -alpha and -beta may be endocrine and/or paracrine factors able to increase intracellular calcium concentrations and induce cell mitogenesis. Salusins may also be potent hypotensive peptides. The sequence is that of Prosalusin (TOR2A) from Homo sapiens (Human).